The sequence spans 530 residues: Cytochrome P450 2U1 (530 aa).

The next 4 membrane-spanning stretches (helical) occupy residues Val21–Trp41, Val99–Phe119, Ile247–Phe267, and Leu328–Leu348. Cys476 lines the heme pocket. The helical transmembrane segment at Leu481–Leu501 threads the bilayer.

Belongs to the cytochrome P450 family. Heme is required as a cofactor. As to expression, widely expressed. Expressed in heart, brain and liver.

It is found in the endoplasmic reticulum membrane. The protein localises to the microsome membrane. Its subcellular location is the mitochondrion inner membrane. It catalyses the reaction an omega-methyl-long-chain fatty acid + reduced [NADPH--hemoprotein reductase] + O2 = an omega-hydroxy-long-chain fatty acid + oxidized [NADPH--hemoprotein reductase] + H2O + H(+). It carries out the reaction (5Z,8Z,11Z,14Z)-eicosatetraenoate + reduced [NADPH--hemoprotein reductase] + O2 = 19-hydroxy-(5Z,8Z,11Z,14Z)-eicosatetraenoate + oxidized [NADPH--hemoprotein reductase] + H2O + H(+). The catalysed reaction is (5Z,8Z,11Z,14Z)-eicosatetraenoate + reduced [NADPH--hemoprotein reductase] + O2 = 20-hydroxy-(5Z,8Z,11Z,14Z)-eicosatetraenoate + oxidized [NADPH--hemoprotein reductase] + H2O + H(+). The enzyme catalyses N-[(5Z,8Z,11Z,14Z)-eicosatetraenoyl]-serotonin + reduced [NADPH--hemoprotein reductase] + O2 = 2-oxo-N-[(5Z,8Z,11Z,14Z)-eicosatetraenoyl]-serotonin + oxidized [NADPH--hemoprotein reductase] + H2O + H(+). Its function is as follows. A cytochrome P450 monooxygenase involved in the metabolism of arachidonic acid and its conjugates. Mechanistically, uses molecular oxygen inserting one oxygen atom into a substrate, and reducing the second into a water molecule, with two electrons provided by NADPH via cytochrome P450 reductase (CPR; NADPH-ferrihemoprotein reductase). Acts as an omega and omega-1 hydroxylase for arachidonic acid and possibly for other long chain fatty acids. May modulate the arachidonic acid signaling pathway and play a role in other fatty acid signaling processes. May down-regulate the biological activities of N-arachidonoyl-serotonin, an endocannabinoid that has anti-nociceptive effects through inhibition of fatty acid amide hydrolase FAAH, TRPV1 receptor and T-type calcium channels. Catalyzes C-2 oxidation of the indole ring of N-arachidonoyl-serotonin forming a less active product 2-oxo-N-arachidonoyl-serotonin. This is Cytochrome P450 2U1 from Mus musculus (Mouse).